A 490-amino-acid polypeptide reads, in one-letter code: Pentatricopeptide repeat-containing protein At2g20710, mitochondrial (490 aa).

The transit peptide at Met-1–Phe-86 directs the protein to the mitochondrion. PPR repeat units follow at residues Asn-138–Lys-172, Gly-173–Pro-207, Asp-208–Leu-243, Asp-244–Met-274, Arg-280–Leu-310, Tyr-314–Gly-344, Asp-349–Lys-379, and Asp-384–Pro-421.

The protein belongs to the PPR family. P subfamily.

It localises to the mitochondrion. This Arabidopsis thaliana (Mouse-ear cress) protein is Pentatricopeptide repeat-containing protein At2g20710, mitochondrial.